Consider the following 269-residue polypeptide: 3-methyl-2-oxobutanoate hydroxymethyltransferase (269 aa).

Positions 51 and 90 each coordinate Mg(2+). Residues 51–52 (DS), D90, and K120 each bind 3-methyl-2-oxobutanoate. E122 provides a ligand contact to Mg(2+). Catalysis depends on E187, which acts as the Proton acceptor.

It belongs to the PanB family. In terms of assembly, homodecamer; pentamer of dimers. The cofactor is Mg(2+).

The protein resides in the cytoplasm. The catalysed reaction is 3-methyl-2-oxobutanoate + (6R)-5,10-methylene-5,6,7,8-tetrahydrofolate + H2O = 2-dehydropantoate + (6S)-5,6,7,8-tetrahydrofolate. Its pathway is cofactor biosynthesis; (R)-pantothenate biosynthesis; (R)-pantoate from 3-methyl-2-oxobutanoate: step 1/2. In terms of biological role, catalyzes the reversible reaction in which hydroxymethyl group from 5,10-methylenetetrahydrofolate is transferred onto alpha-ketoisovalerate to form ketopantoate. The chain is 3-methyl-2-oxobutanoate hydroxymethyltransferase from Tropheryma whipplei (strain TW08/27) (Whipple's bacillus).